Here is a 411-residue protein sequence, read N- to C-terminus: Cytosolic Fe-S cluster assembly factor narfl (411 aa).

Cys-11, Cys-124, Cys-180, Cys-329, and Cys-333 together coordinate [4Fe-4S] cluster.

This sequence belongs to the NARF family. As to quaternary structure, component of the CIA complex.

Component of the cytosolic iron-sulfur protein assembly (CIA) complex, a multiprotein complex that mediates the incorporation of iron-sulfur cluster into extramitochondrial Fe/S proteins. This Danio rerio (Zebrafish) protein is Cytosolic Fe-S cluster assembly factor narfl (narfl).